A 494-amino-acid polypeptide reads, in one-letter code: Protein nucleotidyltransferase YdiU (494 aa).

Residues Gly99, Gly101, Arg102, Lys118, Asp130, Gly131, Arg181, and Arg188 each coordinate ATP. The Proton acceptor role is filled by Asp261. Residues Asn262 and Asp271 each contribute to the Mg(2+) site. Asp271 serves as a coordination point for ATP.

It belongs to the SELO family. Mg(2+) serves as cofactor. Mn(2+) is required as a cofactor.

The enzyme catalyses L-seryl-[protein] + ATP = 3-O-(5'-adenylyl)-L-seryl-[protein] + diphosphate. It carries out the reaction L-threonyl-[protein] + ATP = 3-O-(5'-adenylyl)-L-threonyl-[protein] + diphosphate. It catalyses the reaction L-tyrosyl-[protein] + ATP = O-(5'-adenylyl)-L-tyrosyl-[protein] + diphosphate. The catalysed reaction is L-histidyl-[protein] + UTP = N(tele)-(5'-uridylyl)-L-histidyl-[protein] + diphosphate. The enzyme catalyses L-seryl-[protein] + UTP = O-(5'-uridylyl)-L-seryl-[protein] + diphosphate. It carries out the reaction L-tyrosyl-[protein] + UTP = O-(5'-uridylyl)-L-tyrosyl-[protein] + diphosphate. Its function is as follows. Nucleotidyltransferase involved in the post-translational modification of proteins. It can catalyze the addition of adenosine monophosphate (AMP) or uridine monophosphate (UMP) to a protein, resulting in modifications known as AMPylation and UMPylation. The sequence is that of Protein nucleotidyltransferase YdiU from Variovorax paradoxus (strain S110).